Reading from the N-terminus, the 154-residue chain is Ribonuclease H (154 aa).

Positions 1–142 (MTKQVEIFTD…CDELAREGAN (142 aa)) constitute an RNase H type-1 domain. Residues D10, E48, D70, and D134 each contribute to the Mg(2+) site.

This sequence belongs to the RNase H family. As to quaternary structure, monomer. Requires Mg(2+) as cofactor.

Its subcellular location is the cytoplasm. It catalyses the reaction Endonucleolytic cleavage to 5'-phosphomonoester.. Endonuclease that specifically degrades the RNA of RNA-DNA hybrids. The sequence is that of Ribonuclease H from Yersinia enterocolitica serotype O:8 / biotype 1B (strain NCTC 13174 / 8081).